Consider the following 368-residue polypeptide: Glutamate 5-kinase (368 aa).

Lys-9 is a binding site for ATP. 3 residues coordinate substrate: Ser-49, Asp-136, and Asn-148. Residues 168–169 (TD) and 210–216 (TGGMMTK) contribute to the ATP site. In terms of domain architecture, PUA spans 275–353 (AGIITIDNGA…ADIENVLGYE (79 aa)).

Belongs to the glutamate 5-kinase family.

It localises to the cytoplasm. It catalyses the reaction L-glutamate + ATP = L-glutamyl 5-phosphate + ADP. It functions in the pathway amino-acid biosynthesis; L-proline biosynthesis; L-glutamate 5-semialdehyde from L-glutamate: step 1/2. Functionally, catalyzes the transfer of a phosphate group to glutamate to form L-glutamate 5-phosphate. The chain is Glutamate 5-kinase from Haemophilus influenzae (strain PittGG).